The sequence spans 397 residues: Argininosuccinate synthase (397 aa).

9-17 (AYSGGLDTS) lines the ATP pocket. Residue Tyr87 participates in L-citrulline binding. ATP is bound at residue Gly117. 3 residues coordinate L-aspartate: Thr119, Asn123, and Asp124. Asn123 is a binding site for L-citrulline. Residues Arg127, Ser175, Ser184, Glu257, and Tyr269 each coordinate L-citrulline.

Belongs to the argininosuccinate synthase family. Type 1 subfamily. As to quaternary structure, homotetramer.

It localises to the cytoplasm. It carries out the reaction L-citrulline + L-aspartate + ATP = 2-(N(omega)-L-arginino)succinate + AMP + diphosphate + H(+). Its pathway is amino-acid biosynthesis; L-arginine biosynthesis; L-arginine from L-ornithine and carbamoyl phosphate: step 2/3. This Dictyoglomus thermophilum (strain ATCC 35947 / DSM 3960 / H-6-12) protein is Argininosuccinate synthase.